The primary structure comprises 317 residues: Putative AP2/ERF and B3 domain-containing protein Os01g0140700 (317 aa).

Residues Met-1 to Ala-37 form a disordered region. Over residues Gln-27–Ala-37 the composition is skewed to acidic residues. The AP2/ERF DNA-binding region spans Arg-66–Ala-121. The segment at residues Phe-178–Lys-287 is a DNA-binding region (TF-B3).

It is found in the nucleus. The sequence is that of Putative AP2/ERF and B3 domain-containing protein Os01g0140700 from Oryza sativa subsp. japonica (Rice).